Here is a 131-residue protein sequence, read N- to C-terminus: Global transcriptional regulator Spx (131 aa).

Residues Cys10 and Cys13 are joined by a disulfide bond.

Belongs to the ArsC family. Spx subfamily. As to quaternary structure, interacts with the C-terminal domain of the alpha subunit of the RNAP.

The protein resides in the cytoplasm. Its function is as follows. Global transcriptional regulator that plays a key role in stress response and exerts either positive or negative regulation of genes. Acts by interacting with the C-terminal domain of the alpha subunit of the RNA polymerase (RNAP). This interaction can enhance binding of RNAP to the promoter region of target genes and stimulate their transcription, or block interaction of RNAP with activator. In Staphylococcus saprophyticus subsp. saprophyticus (strain ATCC 15305 / DSM 20229 / NCIMB 8711 / NCTC 7292 / S-41), this protein is Global transcriptional regulator Spx.